The following is a 98-amino-acid chain: NADH-ubiquinone oxidoreductase chain 4L (98 aa).

3 consecutive transmembrane segments (helical) span residues M2–F22, L26–I46, and I59–V79.

The protein belongs to the complex I subunit 4L family. As to quaternary structure, core subunit of respiratory chain NADH dehydrogenase (Complex I) which is composed of 45 different subunits.

It localises to the mitochondrion inner membrane. It carries out the reaction a ubiquinone + NADH + 5 H(+)(in) = a ubiquinol + NAD(+) + 4 H(+)(out). Its function is as follows. Core subunit of the mitochondrial membrane respiratory chain NADH dehydrogenase (Complex I) which catalyzes electron transfer from NADH through the respiratory chain, using ubiquinone as an electron acceptor. Part of the enzyme membrane arm which is embedded in the lipid bilayer and involved in proton translocation. This is NADH-ubiquinone oxidoreductase chain 4L (MT-ND4L) from Phodopus sungorus (Striped hairy-footed hamster).